Consider the following 278-residue polypeptide: Urease accessory protein UreD 1 (278 aa).

It belongs to the UreD family. UreD, UreF and UreG form a complex that acts as a GTP-hydrolysis-dependent molecular chaperone, activating the urease apoprotein by helping to assemble the nickel containing metallocenter of UreC. The UreE protein probably delivers the nickel.

It is found in the cytoplasm. Its function is as follows. Required for maturation of urease via the functional incorporation of the urease nickel metallocenter. In Bradyrhizobium sp. (strain ORS 278), this protein is Urease accessory protein UreD 1.